A 139-amino-acid chain; its full sequence is ATP synthase epsilon chain (139 aa).

This sequence belongs to the ATPase epsilon chain family. As to quaternary structure, F-type ATPases have 2 components, CF(1) - the catalytic core - and CF(0) - the membrane proton channel. CF(1) has five subunits: alpha(3), beta(3), gamma(1), delta(1), epsilon(1). CF(0) has three main subunits: a, b and c.

The protein localises to the cell inner membrane. Its function is as follows. Produces ATP from ADP in the presence of a proton gradient across the membrane. This chain is ATP synthase epsilon chain, found in Pseudomonas putida (strain W619).